The following is a 457-amino-acid chain: Aromatic amino acid transport protein AroP (457 aa).

The Cytoplasmic segment spans residues 1 to 18; the sequence is MMEGQQHGEQLKRGLKNR. A helical transmembrane segment spans residues 19–39; the sequence is HIQLIALGGAIGTGLFLGSAS. Residues 40–42 lie on the Periplasmic side of the membrane; that stretch reads VIQ. The helical transmembrane segment at 43-63 threads the bilayer; that stretch reads SAGPGIILGYAIAGFIAFLIM. The Cytoplasmic portion of the chain corresponds to 64 to 98; that stretch reads RQLGEMVVEEPVAGSFSHFAYKYWGSFAGFASGWN. Residues 99 to 119 traverse the membrane as a helical segment; that stretch reads YWVLYVLVAMAELTAVGKYIQ. At 120 to 124 the chain is on the periplasmic side; that stretch reads FWYPE. The helical transmembrane segment at 125 to 145 threads the bilayer; it reads IPTWVSAAVFFVVINAINLTN. At 146-147 the chain is on the cytoplasmic side; that stretch reads VK. A helical transmembrane segment spans residues 148-168; that stretch reads VFGEMEFWFAIIKVIAVVAMI. The Periplasmic portion of the chain corresponds to 169–192; the sequence is IFGGWLLFSGNGGPQATVSNLWDQ. A helical transmembrane segment spans residues 193–213; that stretch reads GGFLPHGFTGLVMMMAIIMFS. Over 214–239 the chain is Cytoplasmic; sequence FGGLELVGITAAEADNPEQSIPKATN. A helical membrane pass occupies residues 240-260; the sequence is QVIYRILIFYIGSLAVLLSLM. Topologically, residues 261-279 are periplasmic; that stretch reads PWTRVTADTSPFVLIFHEL. A helical transmembrane segment spans residues 280 to 300; it reads GDTFVANALNIVVLTAALSVY. Residues 301 to 330 are Cytoplasmic-facing; that stretch reads NSCVYCNSRMLFGLAQQGNAPKALASVDKR. Residues 331 to 351 form a helical membrane-spanning segment; that stretch reads GVPVNTILVSALVTALCVLIN. At 352–359 the chain is on the periplasmic side; that stretch reads YLAPESAF. A helical transmembrane segment spans residues 360-380; sequence GLLMALVVSALVINWAMISLA. The Cytoplasmic portion of the chain corresponds to 381–402; the sequence is HMKFRRAKQEQGVVTRFPALLY. Residues 403 to 423 form a helical membrane-spanning segment; that stretch reads PLGNWICLLFMAAVLVIMLMT. Residues 424–426 lie on the Periplasmic side of the membrane; it reads PGM. Residues 427–447 traverse the membrane as a helical segment; the sequence is AISVYLIPVWLIVLGIGYLFK. Topologically, residues 448-457 are cytoplasmic; the sequence is EKTAKAVKAH.

Belongs to the amino acid-polyamine-organocation (APC) superfamily. Amino acid transporter (AAT) (TC 2.A.3.1) family.

It is found in the cell inner membrane. The enzyme catalyses L-phenylalanine(in) + H(+)(in) = L-phenylalanine(out) + H(+)(out). It carries out the reaction L-tryptophan(in) + H(+)(in) = L-tryptophan(out) + H(+)(out). It catalyses the reaction L-tyrosine(in) + H(+)(in) = L-tyrosine(out) + H(+)(out). Strong, mutual inhibition of uptake by tyrosine, phenylalanine, and tryptophan. Transport is also inhibited by the aromatic analogs p-fluorophenylalanine, beta-2-thienylalanine and 5-methyltryptophan. In terms of biological role, permease that is involved in the active transport across the cytoplasmic membrane of all three aromatic amino acids, phenylalanine, tyrosine and tryptophan. The protein is Aromatic amino acid transport protein AroP of Escherichia coli (strain K12).